We begin with the raw amino-acid sequence, 338 residues long: Nicotinate-nucleotide--dimethylbenzimidazole phosphoribosyltransferase (338 aa).

The active-site Proton acceptor is the Glu306.

The protein belongs to the CobT family.

The catalysed reaction is 5,6-dimethylbenzimidazole + nicotinate beta-D-ribonucleotide = alpha-ribazole 5'-phosphate + nicotinate + H(+). The protein operates within nucleoside biosynthesis; alpha-ribazole biosynthesis; alpha-ribazole from 5,6-dimethylbenzimidazole: step 1/2. Its function is as follows. Catalyzes the synthesis of alpha-ribazole-5'-phosphate from nicotinate mononucleotide (NAMN) and 5,6-dimethylbenzimidazole (DMB). This is Nicotinate-nucleotide--dimethylbenzimidazole phosphoribosyltransferase from Cereibacter sphaeroides (strain ATCC 17025 / ATH 2.4.3) (Rhodobacter sphaeroides).